A 186-amino-acid polypeptide reads, in one-letter code: dCTP deaminase (186 aa).

107 to 112 (KSTYAR) is a dCTP binding site. E133 serves as the catalytic Proton donor/acceptor. The dCTP site is built by Q152, Y166, and Q176.

This sequence belongs to the dCTP deaminase family. In terms of assembly, homotrimer.

The catalysed reaction is dCTP + H2O + H(+) = dUTP + NH4(+). It functions in the pathway pyrimidine metabolism; dUMP biosynthesis; dUMP from dCTP (dUTP route): step 1/2. Catalyzes the deamination of dCTP to dUTP. The sequence is that of dCTP deaminase from Campylobacter concisus (strain 13826).